The sequence spans 393 residues: Formate-dependent phosphoribosylglycinamide formyltransferase (393 aa).

N(1)-(5-phospho-beta-D-ribosyl)glycinamide contacts are provided by residues Glu22–Leu23 and Glu82. ATP contacts are provided by residues Arg114, Lys155, Ser160–Gln165, Glu195–Val198, and Glu203. In terms of domain architecture, ATP-grasp spans Arg119–Leu308. 2 residues coordinate Mg(2+): Glu267 and Glu279. Residues Asp286, Lys356, and Arg363–Arg364 each bind N(1)-(5-phospho-beta-D-ribosyl)glycinamide.

This sequence belongs to the PurK/PurT family. As to quaternary structure, homodimer.

It carries out the reaction N(1)-(5-phospho-beta-D-ribosyl)glycinamide + formate + ATP = N(2)-formyl-N(1)-(5-phospho-beta-D-ribosyl)glycinamide + ADP + phosphate + H(+). It participates in purine metabolism; IMP biosynthesis via de novo pathway; N(2)-formyl-N(1)-(5-phospho-D-ribosyl)glycinamide from N(1)-(5-phospho-D-ribosyl)glycinamide (formate route): step 1/1. Involved in the de novo purine biosynthesis. Catalyzes the transfer of formate to 5-phospho-ribosyl-glycinamide (GAR), producing 5-phospho-ribosyl-N-formylglycinamide (FGAR). Formate is provided by PurU via hydrolysis of 10-formyl-tetrahydrofolate. In Hydrogenovibrio crunogenus (strain DSM 25203 / XCL-2) (Thiomicrospira crunogena), this protein is Formate-dependent phosphoribosylglycinamide formyltransferase.